A 376-amino-acid polypeptide reads, in one-letter code: Non-structural protein NS2 (376 aa).

The segment covering 163-188 has biased composition (basic and acidic residues); it reads EEREKGAVEQPHKPAFKTERGMNRPD. A disordered region spans residues 163–201; sequence EEREKGAVEQPHKPAFKTERGMNRPDSDEDQNPAGGVVN.

This sequence belongs to the orbivirus non-structural protein NS2 family.

Functionally, single-stranded RNA-binding protein. The protein is Non-structural protein NS2 (Segment-8) of Antilocapra americana (Pronghorn).